A 393-amino-acid polypeptide reads, in one-letter code: Dual-specificity RNA methyltransferase RlmN (393 aa).

Glu114 acts as the Proton acceptor in catalysis. Positions 120–359 (EGDRATLCVS…VIVRKTRGDD (240 aa)) constitute a Radical SAM core domain. Cys127 and Cys364 are disulfide-bonded. Cys134, Cys138, and Cys141 together coordinate [4Fe-4S] cluster. S-adenosyl-L-methionine is bound by residues 188-189 (GE), Ser220, 242-244 (SLH), and Asn321. Cys364 acts as the S-methylcysteine intermediate in catalysis.

Belongs to the radical SAM superfamily. RlmN family. Requires [4Fe-4S] cluster as cofactor.

The protein resides in the cytoplasm. It catalyses the reaction adenosine(2503) in 23S rRNA + 2 reduced [2Fe-2S]-[ferredoxin] + 2 S-adenosyl-L-methionine = 2-methyladenosine(2503) in 23S rRNA + 5'-deoxyadenosine + L-methionine + 2 oxidized [2Fe-2S]-[ferredoxin] + S-adenosyl-L-homocysteine. It carries out the reaction adenosine(37) in tRNA + 2 reduced [2Fe-2S]-[ferredoxin] + 2 S-adenosyl-L-methionine = 2-methyladenosine(37) in tRNA + 5'-deoxyadenosine + L-methionine + 2 oxidized [2Fe-2S]-[ferredoxin] + S-adenosyl-L-homocysteine. In terms of biological role, specifically methylates position 2 of adenine 2503 in 23S rRNA and position 2 of adenine 37 in tRNAs. m2A2503 modification seems to play a crucial role in the proofreading step occurring at the peptidyl transferase center and thus would serve to optimize ribosomal fidelity. The polypeptide is Dual-specificity RNA methyltransferase RlmN (Haemophilus ducreyi (strain 35000HP / ATCC 700724)).